Consider the following 93-residue polypeptide: uncharacterized protein (93 aa).

This is an uncharacterized protein from Escherichia coli (strain K12).